Consider the following 144-residue polypeptide: Large ribosomal subunit protein uL16 (144 aa).

A compositionally biased stretch (basic residues) spans 1-14 (MLMPKRVKYRKPHR). The tract at residues 1–25 (MLMPKRVKYRKPHRPGTQGKATRGN) is disordered.

It belongs to the universal ribosomal protein uL16 family. As to quaternary structure, part of the 50S ribosomal subunit.

Functionally, binds 23S rRNA and is also seen to make contacts with the A and possibly P site tRNAs. This is Large ribosomal subunit protein uL16 from Moorella thermoacetica (strain ATCC 39073 / JCM 9320).